Consider the following 173-residue polypeptide: RNA pyrophosphohydrolase (173 aa).

The 144-residue stretch at 6-149 folds into the Nudix hydrolase domain; sequence GFRANVGIIL…KRGVYRRALR (144 aa). The Nudix box signature appears at 38-59; it reads GGIDEGETPLDAMYRELWEEVG.

This sequence belongs to the Nudix hydrolase family. RppH subfamily. The cofactor is a divalent metal cation.

Accelerates the degradation of transcripts by removing pyrophosphate from the 5'-end of triphosphorylated RNA, leading to a more labile monophosphorylated state that can stimulate subsequent ribonuclease cleavage. In Psychrobacter sp. (strain PRwf-1), this protein is RNA pyrophosphohydrolase.